Here is a 369-residue protein sequence, read N- to C-terminus: Glycolate oxidase (369 aa).

N-acetylmethionine is present on methionine 1. An FMN hydroxy acid dehydrogenase domain is found at 1-359 (MEITNVNEYE…SRSHIAADWD (359 aa)). Tyrosine 24 lines the glyoxylate pocket. Residues 77-79 (PTA), serine 106, 127-129 (QLY), and threonine 155 contribute to the FMN site. Tyrosine 129 serves as a coordination point for glyoxylate. Residue arginine 164 coordinates glyoxylate. The FMN site is built by lysine 230 and serine 252. Glyoxylate-binding residues include histidine 254 and arginine 257. The Proton acceptor role is filled by histidine 254. Residues 285-289 (DGGVR) and 308-309 (GR) each bind FMN. Residues 367 to 369 (ARL) carry the Microbody targeting signal motif.

It belongs to the FMN-dependent alpha-hydroxy acid dehydrogenase family. As to quaternary structure, homotetramer. It depends on FMN as a cofactor.

It localises to the peroxisome. The enzyme catalyses glycolate + O2 = glyoxylate + H2O2. The catalysed reaction is a (2S)-2-hydroxycarboxylate + O2 = a 2-oxocarboxylate + H2O2. It participates in photosynthesis; photorespiration; glycine from 2-phosphoglycolate: step 2/3. Its function is as follows. Catalyzes the oxidation of glycolate to glyoxylate, with a reduction of O2 to H2O2. Is a key enzyme in photorespiration in green plants. To a lesser extent, is also able to use L-lactate and 2-hydroxbyutanoate as substrate in vitro, but shows almost no activity with L-mandelate. This chain is Glycolate oxidase, found in Spinacia oleracea (Spinach).